Here is a 113-residue protein sequence, read N- to C-terminus: Large ribosomal subunit protein uL22 (113 aa).

This sequence belongs to the universal ribosomal protein uL22 family. As to quaternary structure, part of the 50S ribosomal subunit.

Its function is as follows. This protein binds specifically to 23S rRNA; its binding is stimulated by other ribosomal proteins, e.g. L4, L17, and L20. It is important during the early stages of 50S assembly. It makes multiple contacts with different domains of the 23S rRNA in the assembled 50S subunit and ribosome. Functionally, the globular domain of the protein is located near the polypeptide exit tunnel on the outside of the subunit, while an extended beta-hairpin is found that lines the wall of the exit tunnel in the center of the 70S ribosome. This chain is Large ribosomal subunit protein uL22, found in Bacillus cytotoxicus (strain DSM 22905 / CIP 110041 / 391-98 / NVH 391-98).